Consider the following 580-residue polypeptide: Acyl-coenzyme A synthetase ACSM4, mitochondrial (580 aa).

A mitochondrion-targeting transit peptide spans 1–22 (MKIFFRYQTFRFIWLTKPPGRR). Residues 229-237 (TSGTTGFPK), 368-373 (EGYGQT), D455, R470, and K566 contribute to the ATP site.

The protein belongs to the ATP-dependent AMP-binding enzyme family. It depends on Mg(2+) as a cofactor. Mn(2+) serves as cofactor.

It localises to the mitochondrion. It catalyses the reaction a medium-chain fatty acid + ATP + CoA = a medium-chain fatty acyl-CoA + AMP + diphosphate. The enzyme catalyses hexanoate + ATP + CoA = hexanoyl-CoA + AMP + diphosphate. The catalysed reaction is octanoate + ATP + CoA = octanoyl-CoA + AMP + diphosphate. It carries out the reaction decanoate + ATP + CoA = decanoyl-CoA + AMP + diphosphate. It catalyses the reaction dodecanoate + ATP + CoA = dodecanoyl-CoA + AMP + diphosphate. In terms of biological role, catalyzes the activation of fatty acids by CoA to produce an acyl-CoA, the first step in fatty acid metabolism. Capable of activating medium-chain fatty acids with a preference for C6-12 fatty acids. This chain is Acyl-coenzyme A synthetase ACSM4, mitochondrial (ACSM4), found in Homo sapiens (Human).